A 569-amino-acid polypeptide reads, in one-letter code: Lysine--tRNA ligase (569 aa).

Residues Glu414 and Glu421 each contribute to the Mg(2+) site.

Belongs to the class-II aminoacyl-tRNA synthetase family. As to quaternary structure, homodimer. It depends on Mg(2+) as a cofactor.

Its subcellular location is the cytoplasm. The enzyme catalyses tRNA(Lys) + L-lysine + ATP = L-lysyl-tRNA(Lys) + AMP + diphosphate. The protein is Lysine--tRNA ligase of Christiangramia forsetii (strain DSM 17595 / CGMCC 1.15422 / KT0803) (Gramella forsetii).